Reading from the N-terminus, the 266-residue chain is uncharacterized protein (266 aa).

7 helical membrane passes run Leu-25–Leu-45, Ile-64–Ile-84, Ile-111–Val-131, Val-158–Gly-178, Ile-186–Ala-206, Phe-209–Ile-229, and Ile-230–Ile-250.

Belongs to the FNT transporter (TC 1.A.16) family.

It is found in the cell membrane. This is an uncharacterized protein from Bacillus subtilis (strain 168).